The chain runs to 463 residues: Ribosomal protein uS12 methylthiotransferase RimO (463 aa).

Positions 15–130 (PKVGFVSLGC…VMQAVHSHLP (116 aa)) constitute an MTTase N-terminal domain. [4Fe-4S] cluster is bound by residues cysteine 24, cysteine 60, cysteine 89, cysteine 161, cysteine 165, and cysteine 168. Residues 147–392 (LTPRHYAYLK…MEVAEQVSAK (246 aa)) form the Radical SAM core domain. A TRAM domain is found at 395–463 (ARKVGKTLKV…ADGHDLWGEV (69 aa)).

Belongs to the methylthiotransferase family. RimO subfamily. The cofactor is [4Fe-4S] cluster.

It is found in the cytoplasm. It catalyses the reaction L-aspartate(89)-[ribosomal protein uS12]-hydrogen + (sulfur carrier)-SH + AH2 + 2 S-adenosyl-L-methionine = 3-methylsulfanyl-L-aspartate(89)-[ribosomal protein uS12]-hydrogen + (sulfur carrier)-H + 5'-deoxyadenosine + L-methionine + A + S-adenosyl-L-homocysteine + 2 H(+). Its function is as follows. Catalyzes the methylthiolation of an aspartic acid residue of ribosomal protein uS12. In Paraburkholderia phymatum (strain DSM 17167 / CIP 108236 / LMG 21445 / STM815) (Burkholderia phymatum), this protein is Ribosomal protein uS12 methylthiotransferase RimO.